We begin with the raw amino-acid sequence, 609 residues long: X-ray repair cross-complementing protein 6 (609 aa).

Residues 1–28 form a disordered region; sequence MSGWESYYKTEGDEEAEEEQEENLEASG. Position 2 is an N-acetylserine (Ser-2). Position 2 is a phosphoserine (Ser-2). Ser-6 carries the phosphoserine; by PRKDC modification. A compositionally biased stretch (acidic residues) spans 12–24; the sequence is GDEEAEEEQEENL. Residue Ser-27 is modified to Phosphoserine. Lys-31 (schiff-base intermediate with DNA; for 5'-deoxyribose-5-phosphate lyase activity) is an active-site residue. At Lys-31 the chain carries N6-acetyllysine. Position 51 is a phosphoserine; by PRKDC (Ser-51). One can recognise a Ku domain in the interval 261–468; that stretch reads LKLNKDIVIS…VGKMKAIVEK (208 aa). The DNA-binding stretch occupies residues 277–341; that stretch reads VQKALKPPPI…EETEELKRFD (65 aa). Lys-287 is covalently cross-linked (Glycyl lysine isopeptide (Lys-Gly) (interchain with G-Cter in SUMO2)). Ser-306 carries the post-translational modification Phosphoserine. N6-acetyllysine occurs at positions 317, 331, and 338. Lys-317 participates in a covalent cross-link: Glycyl lysine isopeptide (Lys-Gly) (interchain with G-Cter in SUMO2). The segment at 373–482 is interaction with XRCC5; that stretch reads SLVIGSSTLF…YRSDSFENPV (110 aa). Position 455 is a phosphothreonine (Thr-455). Lys-461 carries the post-translational modification N6-acetyllysine. Phosphoserine occurs at positions 477 and 520. Residues 536-562 are disordered; sequence PEGKVTKRKHDNEGSGSKRPKVEYSEE. N6-acetyllysine is present on residues Lys-539, Lys-542, and Lys-544. Ser-550 carries the phosphoserine modification. Residues 550–609 are interaction with DEAF1; that stretch reads SGSKRPKVEYSEEELKTHISKGTLGKFTVPMLKEACRAYGLKSGLKKQELLEALTKHFQD. N6-acetyllysine is present on residues Lys-553 and Lys-556. Residue Lys-556 forms a Glycyl lysine isopeptide (Lys-Gly) (interchain with G-Cter in SUMO2) linkage. Ser-560 is modified (phosphoserine). Position 570 is an N6,N6,N6-trimethyllysine (Lys-570). One can recognise an SAP domain in the interval 573-607; sequence LGKFTVPMLKEACRAYGLKSGLKKQELLEALTKHF. The interval 578 to 583 is interaction with BAX; the sequence is VPMLKE.

This sequence belongs to the ku70 family. Forms a heterodimer with XRCC5/Ku80; heterodimerization stabilizes XRCC5 protein. Component of the core long-range non-homologous end joining (NHEJ) complex (also named DNA-PK complex) composed of PRKDC, LIG4, XRCC4, XRCC6/Ku70, XRCC5/Ku86 and NHEJ1/XLF. Additional component of the NHEJ complex includes PAXX. Following autophosphorylation, PRKDC dissociates from DNA, leading to formation of the short-range NHEJ complex, composed of LIG4, XRCC4, XRCC6/Ku70, XRCC5/Ku86 and NHEJ1/XLF. The XRCC5-XRCC6 dimer also associates with NAA15, and this complex binds to the osteocalcin promoter and activates osteocalcin expression. In addition, XRCC6 interacts with the osteoblast-specific transcription factors MSX2, RUNX2 and DLX5. Interacts with ELF3. Interacts with ATP23. The XRCC5-XRRC6 dimer associates in a DNA-dependent manner with APEX1. Binds to CDK9 isoform 2. Identified in a complex with DEAF1 and XRCC5. Interacts with DEAF1 (via the SAND domain); the interaction is direct and may be inhibited by DNA-binding. Interacts with CLU. Interacts with NR4A3; the DNA-dependent protein kinase complex DNA-PK phosphorylates and activates NR4A3 and prevents NR4A3 ubiquitinylation and degradation. Interacts with CYREN isoform 1 (CYREN-1) and isoform 4 (CYREN-2) (via KBM motif). Interacts (via N-terminus) with HSF1 (via N-terminus); this interaction is direct and prevents XRCC5/XRCC6 heterodimeric binding and non-homologous end joining (NHEJ) repair activities induced by ionizing radiation (IR). Part of the HDP-RNP complex composed of at least HEXIM1, PRKDC, XRCC5, XRCC6, paraspeckle proteins (SFPQ, NONO, PSPC1, RBM14, and MATR3) and NEAT1 RNA. Interacts with HMBOX1. Interacts with ATF7. Interacts with APLF (via KBM motif). Interacts with WRN (via KBM motif). The XRCC5-XRCC6 dimer associates with ALKBH2. Interacts with TPRN; TPRN interacts with a number of DNA damage response proteins, is recruited to sites of DNA damage and may play a role in DNA damage repair. When not acetylated, interacts with BAX. Interacts with ERCC6L2. In terms of assembly, (Microbial infection) Interacts with human T-cell leukemia virus 1/HTLV-1 protein HBZ. Post-translationally, phosphorylation by PRKDC may enhance helicase activity. Phosphorylation of Ser-51 does not affect DNA repair. In terms of processing, ADP-ribosylated by PARP3. Methylation by SETD4 leads to accumulation in the cytoplasm and is a prerequisite for acetylation, possibly due to the change of subcellular from the nucleus to the cytosol initiated by methylation, acetylation occurring in the cytosol. Post-translationally, acetylation can be catalyzed in vitro by CREBBP/CBP and KAT2B/PCAF.

It localises to the nucleus. The protein localises to the chromosome. Its subcellular location is the cytoplasm. Single-stranded DNA-dependent ATP-dependent helicase that plays a key role in DNA non-homologous end joining (NHEJ) by recruiting DNA-PK to DNA. Required for double-strand break repair and V(D)J recombination. Also has a role in chromosome translocation. Has a role in chromosome translocation. The DNA helicase II complex binds preferentially to fork-like ends of double-stranded DNA in a cell cycle-dependent manner. It works in the 3'-5' direction. During NHEJ, the XRCC5-XRRC6 dimer performs the recognition step: it recognizes and binds to the broken ends of the DNA and protects them from further resection. Binding to DNA may be mediated by XRCC6. The XRCC5-XRRC6 dimer acts as a regulatory subunit of the DNA-dependent protein kinase complex DNA-PK by increasing the affinity of the catalytic subunit PRKDC to DNA by 100-fold. The XRCC5-XRRC6 dimer is probably involved in stabilizing broken DNA ends and bringing them together. The assembly of the DNA-PK complex to DNA ends is required for the NHEJ ligation step. Probably also acts as a 5'-deoxyribose-5-phosphate lyase (5'-dRP lyase), by catalyzing the beta-elimination of the 5' deoxyribose-5-phosphate at an abasic site near double-strand breaks. 5'-dRP lyase activity allows to 'clean' the termini of abasic sites, a class of nucleotide damage commonly associated with strand breaks, before such broken ends can be joined. The XRCC5-XRRC6 dimer together with APEX1 acts as a negative regulator of transcription. In association with NAA15, the XRCC5-XRRC6 dimer binds to the osteocalcin promoter and activates osteocalcin expression. Plays a role in the regulation of DNA virus-mediated innate immune response by assembling into the HDP-RNP complex, a complex that serves as a platform for IRF3 phosphorylation and subsequent innate immune response activation through the cGAS-STING pathway. Negatively regulates apoptosis by interacting with BAX and sequestering it from the mitochondria. Might have deubiquitination activity, acting on BAX. The protein is X-ray repair cross-complementing protein 6 (XRCC6) of Homo sapiens (Human).